Consider the following 163-residue polypeptide: NADH-quinone oxidoreductase subunit I (163 aa).

2 consecutive 4Fe-4S ferredoxin-type domains span residues 53–83 (LRRYPNGEERCIACKLCEAICPAQAITIEAG) and 94–123 (VRYDIDMVKCIYCGFCQEACPVEAIVEGPN). Residues Cys63, Cys66, Cys69, Cys73, Cys103, Cys106, Cys109, and Cys113 each coordinate [4Fe-4S] cluster.

This sequence belongs to the complex I 23 kDa subunit family. NDH-1 is composed of 14 different subunits. Subunits NuoA, H, J, K, L, M, N constitute the membrane sector of the complex. [4Fe-4S] cluster is required as a cofactor.

The protein resides in the cell inner membrane. It carries out the reaction a quinone + NADH + 5 H(+)(in) = a quinol + NAD(+) + 4 H(+)(out). Its function is as follows. NDH-1 shuttles electrons from NADH, via FMN and iron-sulfur (Fe-S) centers, to quinones in the respiratory chain. The immediate electron acceptor for the enzyme in this species is believed to be ubiquinone. Couples the redox reaction to proton translocation (for every two electrons transferred, four hydrogen ions are translocated across the cytoplasmic membrane), and thus conserves the redox energy in a proton gradient. The polypeptide is NADH-quinone oxidoreductase subunit I (Bartonella quintana (strain Toulouse) (Rochalimaea quintana)).